The following is a 295-amino-acid chain: Cyclin-G1 (295 aa).

It belongs to the cyclin family. Cyclin G subfamily.

Its subcellular location is the nucleus. Functionally, may play a role in growth regulation. Is associated with G2/M phase arrest in response to DNA damage. May be an intermediate by which p53 mediates its role as an inhibitor of cellular proliferation. The sequence is that of Cyclin-G1 (CCNG1) from Bos taurus (Bovine).